A 1733-amino-acid chain; its full sequence is Desertorin synthase (1733 aa).

Residues 21–358 (RIRQQSRSSR…HAPTRDLTEW (338 aa)) form an N-terminal acylcarrier protein transacylase domain (SAT) region. One can recognise a Ketosynthase family 3 (KS3) domain in the interval 372 to 799 (DCRIAVVGMS…GGNTALLLEE (428 aa)). A compositionally biased stretch (basic and acidic residues) spans 406 to 422 (HVPPDRYDVQSHTDPTG). The segment at 406-429 (HVPPDRYDVQSHTDPTGRRMNTSQ) is disordered. Residues cysteine 544, histidine 679, and histidine 718 each act as for beta-ketoacyl synthase activity in the active site. The interval 903–1211 (FVFSGQGSFY…DNWHTLAGSM (309 aa)) is malonyl-CoA:ACP transacylase (MAT) domain. Positions 1288–1420 (HRIVEETFWA…GTVSVGNAAS (133 aa)) are N-terminal hotdog fold. The PKS/mFAS DH domain occupies 1288–1598 (HRIVEETFWA…LRPLPRILMH (311 aa)). A product template (PT) domain region spans residues 1299-1594 (GGRVVMESNV…AGVTLRPLPR (296 aa)). The Proton acceptor; for dehydratase activity role is filled by histidine 1320. Positions 1448-1598 (ADRLTRDTVY…LRPLPRILMH (151 aa)) are C-terminal hotdog fold. The active-site Proton donor; for dehydratase activity is aspartate 1506. The disordered stretch occupies residues 1608 to 1659 (HNWGNSPAKPEAKPEMVPTSGSSSAAGSPSGSSAGPLSIPERLADPSETSFQ). Low complexity predominate over residues 1627–1643 (SGSSSAAGSPSGSSAGP). The region spanning 1659-1733 (QSKASKVSKA…TVGEVKRQML (75 aa)) is the Carrier domain. Serine 1696 is subject to O-(pantetheine 4'-phosphoryl)serine.

Pantetheine 4'-phosphate serves as cofactor.

It participates in secondary metabolite biosynthesis. Functionally, non-reducing polyketide synthase; part of the gene cluster that mediates the biosynthesis of the bicoumarin desertorin. The non-reducing polyketide synthase desS first catalyzes the formation of the pentaketidic 4,7-dihydroxy-5-methylcoumarin from acetyl coenzyme A and 4 malonyl coenzyme A molecules. Further O-methylation by desB leads to the formation of 7-demethylsiderin. Then, an oxidative phenol coupling catalyzed by the cytochrome P450 monooxygenase desC forms the 6,8'-dimer M-desertorin A via dimerization the monomeric precursor, 7-demethylsiderin. M-desertorin A is further converted to M-desertorin C. In Aspergillus desertorum (Emericella desertorum), this protein is Desertorin synthase.